Reading from the N-terminus, the 363-residue chain is MAKVAKDLNPRVQKMSLGQQQSARGVPCLRCKGTCSGFEPHSWRKICKSCKCSQEDHCLSSDLEDDRKIGRLLMDSKYSTLTARVKGGDGIRIYKRNRMIMTNPIATGKDPTFDTITYEWAPPGVTQKLGLQYMELIPKEKQPVTGTEGALYRRRQLMHQLPIYDQDPSRCRGLLENELKVMEEFVKQYKSEALGVGEVALPGQGGLPKEEGKQQEKPEGAETAPPTTNGSIGDPSKEYVCELCKGVAPADSPVVYSDRAGYSKQWHPACFVCAKCSEPLVDLIYFWKDGAPWCGRHYCESLRPRCSGCDEIIFSEDYQRVEDLAWHRKHFVCEGCEQQLGGRAYIVTMGQLLCPTCSKSKRS.

A Phosphoserine modification is found at serine 16. The PET domain maps to 99–206 (MIMTNPIATG…GEVALPGQGG (108 aa)). The disordered stretch occupies residues 200–234 (ALPGQGGLPKEEGKQQEKPEGAETAPPTTNGSIGD). Residues 208–220 (PKEEGKQQEKPEG) show a composition bias toward basic and acidic residues. 2 LIM zinc-binding domains span residues 239–304 (YVCE…SLRP) and 305–363 (RCSG…SKRS).

Interacts with beta-dystroglycan. Interacts with GATA1, GATA4 and GATA6.

The protein localises to the cytoplasm. It is found in the nucleus. In terms of biological role, transcriptional cofactor that restricts GATA6 function by inhibiting DNA-binding, resulting in repression of GATA6 transcriptional activation of downstream target genes. Represses GATA6-mediated trans activation of lung- and cardiac tissue-specific promoters. Inhibits DNA-binding by GATA4 and GATA1 to the cTNC promoter. Plays a critical role in the development of cardiac hypertrophy via activation of calcineurin/nuclear factor of activated T-cells signaling pathway. The polypeptide is LIM and cysteine-rich domains protein 1 (LMCD1) (Bos taurus (Bovine)).